Here is a 339-residue protein sequence, read N- to C-terminus: Tetraacyldisaccharide 4'-kinase (339 aa).

53 to 60 (TCGGAGKT) is a binding site for ATP.

The protein belongs to the LpxK family.

The enzyme catalyses a lipid A disaccharide + ATP = a lipid IVA + ADP + H(+). It functions in the pathway glycolipid biosynthesis; lipid IV(A) biosynthesis; lipid IV(A) from (3R)-3-hydroxytetradecanoyl-[acyl-carrier-protein] and UDP-N-acetyl-alpha-D-glucosamine: step 6/6. Its function is as follows. Transfers the gamma-phosphate of ATP to the 4'-position of a tetraacyldisaccharide 1-phosphate intermediate (termed DS-1-P) to form tetraacyldisaccharide 1,4'-bis-phosphate (lipid IVA). This Bartonella henselae (strain ATCC 49882 / DSM 28221 / CCUG 30454 / Houston 1) (Rochalimaea henselae) protein is Tetraacyldisaccharide 4'-kinase.